The primary structure comprises 167 residues: Putative 4-hydroxy-4-methyl-2-oxoglutarate aldolase (167 aa).

Substrate-binding positions include 81-84 (GDII) and Arg-103. Residue Asp-104 coordinates a divalent metal cation.

This sequence belongs to the class II aldolase/RraA-like family. Homotrimer. A divalent metal cation is required as a cofactor.

The catalysed reaction is 4-hydroxy-4-methyl-2-oxoglutarate = 2 pyruvate. The enzyme catalyses oxaloacetate + H(+) = pyruvate + CO2. Its function is as follows. Catalyzes the aldol cleavage of 4-hydroxy-4-methyl-2-oxoglutarate (HMG) into 2 molecules of pyruvate. Also contains a secondary oxaloacetate (OAA) decarboxylase activity due to the common pyruvate enolate transition state formed following C-C bond cleavage in the retro-aldol and decarboxylation reactions. This is Putative 4-hydroxy-4-methyl-2-oxoglutarate aldolase from Corynebacterium jeikeium (strain K411).